The primary structure comprises 203 residues: uncharacterized protein (203 aa).

The signal sequence occupies residues 1-31 (MKKTFVKKAMLTTAAMTSAALLTFGPDAASA).

This is an uncharacterized protein from Bacillus subtilis (strain 168).